Reading from the N-terminus, the 162-residue chain is MIRIGHGFDVHAFGGEGPIIIGGVAIPYEKGLVAHSDGDVALHALTDALLGAMALGDIGKLFPDTDIQYKGADSRRLLRTAYQAILDKGYQVGNVDITIIAQAPKMRPYIDSMRTVIAQDLHCDIEQVNVKATTTEKLGFTGRSEGIACEAVVLLIKQNGTK.

A divalent metal cation is bound by residues aspartate 9 and histidine 11. Residues 9 to 11 and 35 to 36 each bind 4-CDP-2-C-methyl-D-erythritol 2-phosphate; these read DVH and HS. Histidine 43 serves as a coordination point for a divalent metal cation. 4-CDP-2-C-methyl-D-erythritol 2-phosphate-binding positions include 57 to 59, 62 to 66, 133 to 136, phenylalanine 140, and arginine 143; these read DIG, FPDTD, and TTTE.

This sequence belongs to the IspF family. Homotrimer. A divalent metal cation is required as a cofactor.

It carries out the reaction 4-CDP-2-C-methyl-D-erythritol 2-phosphate = 2-C-methyl-D-erythritol 2,4-cyclic diphosphate + CMP. It functions in the pathway isoprenoid biosynthesis; isopentenyl diphosphate biosynthesis via DXP pathway; isopentenyl diphosphate from 1-deoxy-D-xylulose 5-phosphate: step 4/6. Involved in the biosynthesis of isopentenyl diphosphate (IPP) and dimethylallyl diphosphate (DMAPP), two major building blocks of isoprenoid compounds. Catalyzes the conversion of 4-diphosphocytidyl-2-C-methyl-D-erythritol 2-phosphate (CDP-ME2P) to 2-C-methyl-D-erythritol 2,4-cyclodiphosphate (ME-CPP) with a corresponding release of cytidine 5-monophosphate (CMP). The sequence is that of 2-C-methyl-D-erythritol 2,4-cyclodiphosphate synthase from Histophilus somni (strain 2336) (Haemophilus somnus).